A 148-amino-acid chain; its full sequence is Histone H2A-like 3 (148 aa).

The segment at 101-128 (DDTHSQVEEMPQSEEEEEEEEEKEEEMV) is disordered. Positions 111–127 (PQSEEEEEEEEEKEEEM) are enriched in acidic residues.

It belongs to the histone H2A family. The nucleosome is a histone octamer containing two molecules each of H2A, H2B, H3 and H4 assembled in one H3-H4 heterotetramer and two H2A-H2B heterodimers. The octamer wraps approximately 147 bp of DNA.

It is found in the nucleus. The protein localises to the chromosome. In terms of biological role, core component of nucleosome. Nucleosomes wrap and compact DNA into chromatin, limiting DNA accessibility to the cellular machineries which require DNA as a template. Histones thereby play a central role in transcription regulation, DNA repair, DNA replication and chromosomal stability. DNA accessibility is regulated via a complex set of post-translational modifications of histones, also called histone code, and nucleosome remodeling. In Homo sapiens (Human), this protein is Histone H2A-like 3.